The chain runs to 206 residues: Carbonic anhydrase (206 aa).

Lys-11 participates in a covalent cross-link: Isoglutamyl lysine isopeptide (Lys-Gln) (interchain with Q-Cter in protein Pup). The Zn(2+) site is built by Cys-51, Asp-53, His-104, and Cys-107.

It belongs to the beta-class carbonic anhydrase family. As to quaternary structure, homotetramer. Zn(2+) is required as a cofactor.

The catalysed reaction is hydrogencarbonate + H(+) = CO2 + H2O. Its function is as follows. Catalyzes the reversible hydration of carbon dioxide to form bicarbonate. The sequence is that of Carbonic anhydrase (cynT) from Mycolicibacterium smegmatis (strain ATCC 700084 / mc(2)155) (Mycobacterium smegmatis).